The sequence spans 400 residues: Phosphoglycerate kinase (400 aa).

Residues 19 to 21, arginine 38, 61 to 64, arginine 124, and arginine 161 contribute to the substrate site; these read DLN and HLGR. ATP-binding positions include lysine 211, glycine 299, glutamate 330, and 356–359; that span reads GGDS.

It belongs to the phosphoglycerate kinase family. Monomer.

The protein resides in the cytoplasm. It carries out the reaction (2R)-3-phosphoglycerate + ATP = (2R)-3-phospho-glyceroyl phosphate + ADP. It functions in the pathway carbohydrate degradation; glycolysis; pyruvate from D-glyceraldehyde 3-phosphate: step 2/5. The polypeptide is Phosphoglycerate kinase (Frankia casuarinae (strain DSM 45818 / CECT 9043 / HFP020203 / CcI3)).